We begin with the raw amino-acid sequence, 398 residues long: Nocardicin C N-oxygenase (398 aa).

Residues 63–90 (RARAAGREETPRVTPEAAPAGSMLSMDP) are disordered. H93, R97, R289, H345, and C347 together coordinate heme.

This sequence belongs to the cytochrome P450 family. The cofactor is heme.

It catalyses the reaction nocardicin C + 4 reduced [2Fe-2S]-[ferredoxin] + 2 O2 + 2 H(+) = nocardicin A + 4 oxidized [2Fe-2S]-[ferredoxin] + 3 H2O. It participates in antibiotic biosynthesis. Its function is as follows. Involved in the biosynthesis of the beta-lactam antibiotic nocardicin A. Catalyzes the conversion of nocardicin C to nocardicin A. Cannot use nocardicin G. This is Nocardicin C N-oxygenase from Nocardia uniformis subsp. tsuyamanensis.